We begin with the raw amino-acid sequence, 127 residues long: Large ribosomal subunit protein bL20 (127 aa).

The protein belongs to the bacterial ribosomal protein bL20 family.

Binds directly to 23S ribosomal RNA and is necessary for the in vitro assembly process of the 50S ribosomal subunit. It is not involved in the protein synthesizing functions of that subunit. The polypeptide is Large ribosomal subunit protein bL20 (Bifidobacterium longum (strain NCC 2705)).